A 714-amino-acid polypeptide reads, in one-letter code: Protein HAPLESS 2-B (714 aa).

The signal sequence occupies residues 1–33 (MAPRRRRRAARSSRPLLLALLAAAVNNFAPAGG). Topologically, residues 34 to 552 (VEVLAKSRLE…FFTGTTCSTR (519 aa)) are extracellular. 7 cysteine pairs are disulfide-bonded: Cys45–Cys59, Cys134–Cys164, Cys146–Cys194, Cys165–Cys321, Cys167–Cys177, Cys304–Cys328, and Cys441–Cys479. A helical membrane pass occupies residues 553–573 (CWSFLKFVIHGLLLVAVLWLL). Topologically, residues 574-714 (HRKGLFDPLY…HGDRRHHAWH (141 aa)) are cytoplasmic. The interval 597 to 619 (RARRRHKRAHSHRHSHHHDAHKR) is disordered. Basic residues predominate over residues 598–619 (ARRRHKRAHSHRHSHHHDAHKR).

Belongs to the HAP2/GCS1 family.

It is found in the endoplasmic reticulum membrane. Its subcellular location is the cell membrane. Required for male fertility. Plays a role in pollen tube guidance and successful gamete attachment. Essential for the fusion of gametes during double fertilization, where one male gamete fuses with the egg to produce a zygote, and another male gamete fuses with the central cell to produce the endosperm. Mediates the fusion of cell membranes. Not required for pollen tube outgrowth. The chain is Protein HAPLESS 2-B (HAP2B) from Oryza sativa subsp. japonica (Rice).